A 264-amino-acid chain; its full sequence is 3-methyl-2-oxobutanoate hydroxymethyltransferase (264 aa).

Residues Asp45 and Asp84 each contribute to the Mg(2+) site. Residues 45–46 (DS), Asp84, and Lys112 each bind 3-methyl-2-oxobutanoate. Mg(2+) is bound at residue Glu114. Residue Glu181 is the Proton acceptor of the active site.

The protein belongs to the PanB family. As to quaternary structure, homodecamer; pentamer of dimers. The cofactor is Mg(2+).

It localises to the cytoplasm. The enzyme catalyses 3-methyl-2-oxobutanoate + (6R)-5,10-methylene-5,6,7,8-tetrahydrofolate + H2O = 2-dehydropantoate + (6S)-5,6,7,8-tetrahydrofolate. It functions in the pathway cofactor biosynthesis; (R)-pantothenate biosynthesis; (R)-pantoate from 3-methyl-2-oxobutanoate: step 1/2. In terms of biological role, catalyzes the reversible reaction in which hydroxymethyl group from 5,10-methylenetetrahydrofolate is transferred onto alpha-ketoisovalerate to form ketopantoate. This chain is 3-methyl-2-oxobutanoate hydroxymethyltransferase, found in Shigella boydii serotype 18 (strain CDC 3083-94 / BS512).